We begin with the raw amino-acid sequence, 115 residues long: NADH-ubiquinone oxidoreductase chain 3 (115 aa).

3 helical membrane passes run 3–23, 55–75, and 86–106; these read LILT…IAFW, FFLV…LLPL, and TMLT…AYEW.

The protein belongs to the complex I subunit 3 family. As to quaternary structure, core subunit of respiratory chain NADH dehydrogenase (Complex I) which is composed of 45 different subunits. Interacts with TMEM186. Interacts with TMEM242.

The protein localises to the mitochondrion inner membrane. The catalysed reaction is a ubiquinone + NADH + 5 H(+)(in) = a ubiquinol + NAD(+) + 4 H(+)(out). Its function is as follows. Core subunit of the mitochondrial membrane respiratory chain NADH dehydrogenase (Complex I) which catalyzes electron transfer from NADH through the respiratory chain, using ubiquinone as an electron acceptor. Essential for the catalytic activity of complex I. This is NADH-ubiquinone oxidoreductase chain 3 from Rhinoceros unicornis (Greater Indian rhinoceros).